Consider the following 589-residue polypeptide: MASSSSPERGLEALRDTDESEGEAPGPSGPRGRGGPSGAGSALRLRSLEAEMAAACVTSTAGEDLGTFSEPGSQHGDPEGGGGPDLELGHARPMMRSQRELGLTPKGGGKADQGGKGRKGGSGSPPHTKSSRKREQPNPNRSLMAQGAAGPPLPGARGSPAMPQPESSLSPRPDQSHHFDFPVGNLEAPGPTLRSSTSQGSGSTPVPEALRCAESSRAESDQSSPAGRELRQQASPRAPDDDDDGDGGPDPRGSGTPEGWVLRSGVVPFGRRSSASEVSPEEVRPEAQCTGWNLRPRPRSSASAVSPEARPKAQSAGRNLRPRPRSSASVVSPEARPKAQSAGRNLRPRPRSSASVVSPEARPEAQSAGRNLRPRATPRVPVAPSSTTRSSSDRGSSRAPRSRSRSRSCSTPRLGSDHQRSRKIKMRLDLQVDREPESEAEQEEQELESEPGPSSRPQASRSSSRFAVPGRSSLAAEDSPPRRPVRMRASSPSPPGRLYPLPKHYFEGVHSPSSSSSESSSVSSSHSPLNKAPDPGSSPPLSSLSGPNPFWLALIADLDNLDSSSPRVPGEEIEAAPHTREEEDKKCRG.

Disordered regions lie at residues 1 to 46 (MASS…LRLR), 61 to 548 (AGED…SGPN), and 561 to 589 (LDSSSPRVPGEEIEAAPHTREEEDKKCRG). Gly residues-rich tracts occupy residues 29–38 (GPRGRGGPSG) and 105–114 (PKGGGKADQG). The segment covering 147 to 161 (GAAGPPLPGARGSPA) has biased composition (low complexity). Positions 193 to 204 (LRSSTSQGSGST) are enriched in polar residues. 4 stretches are compositionally biased toward low complexity: residues 299-308 (RSSASAVSPE), 325-334 (RSSASVVSPE), 351-360 (RSSASVVSPE), and 374-390 (PRATPRVPVAPSSTTRS). Ser-306 is subject to Phosphoserine. The span at 426-437 (MRLDLQVDREPE) shows a compositional bias: basic and acidic residues. The segment covering 438-449 (SEAEQEEQELES) has biased composition (acidic residues). The span at 450 to 465 (EPGPSSRPQASRSSSR) shows a compositional bias: low complexity. The segment at 482-490 (RRPVRMRAS) is sufficient for interaction with EZH2. Residues 484 to 503 (PVRMRASSPSPPGRLYPLPK) are necessary and sufficient for inhibition of PRC2/EED-EZH1 and PRC2/EED-EZH2 complex activity. The segment covering 509-547 (VHSPSSSSSESSSVSSSHSPLNKAPDPGSSPPLSSLSGP) has biased composition (low complexity). The segment covering 575-589 (AAPHTREEEDKKCRG) has biased composition (basic and acidic residues).

Interacts with PRC2/EED-EZH1 complex member EZH1 and with PRC2/EED-EZH2 complex member EZH2; the interaction blocks EZH1/EZH2 methyltransferase activity. Interacts (via C-terminus) with SUZ12 which is a member of the PRC2/EED-EZH1 and PRC2/EED-EZH2 complexes. Highly expressed in ovary with lower expression in testis and very low levels in other tissues tested including prostate, brain, kidney, spleen and liver. During spermatogenesis, expressed mainly in spermatogonia with very low expression in spermatocytes I and II.

It localises to the nucleus. The protein localises to the cytoplasm. Its function is as follows. Inhibits PRC2/EED-EZH1 and PRC2/EED-EZH2 complex function by inhibiting EZH1/EZH2 methyltransferase activity, thereby causing down-regulation of histone H3 trimethylation at 'Lys-27' (H3K27me3). Probably inhibits methyltransferase activity by limiting the stimulatory effect of cofactors such as AEBP2 and JARID2. Inhibits H3K27me3 deposition during spermatogenesis and oogenesis. This is EZH inhibitory protein from Mus musculus (Mouse).